The sequence spans 338 residues: Ornithine carbamoyltransferase (338 aa).

S2 carries the post-translational modification N-acetylserine. Carbamoyl phosphate is bound by residues 67–70 (STRT), R118, H145, and Q148. The L-ornithine site is built by N185, D249, S253, and M254. The active-site Proton acceptor is the C289. Carbamoyl phosphate is bound by residues 289 to 290 (CL) and R316.

Belongs to the aspartate/ornithine carbamoyltransferase superfamily. OTCase family. In terms of assembly, interacts with CAR1.

It localises to the cytoplasm. It catalyses the reaction carbamoyl phosphate + L-ornithine = L-citrulline + phosphate + H(+). It functions in the pathway amino-acid biosynthesis; L-arginine biosynthesis; L-arginine from L-ornithine and carbamoyl phosphate: step 1/3. Forms a stable complex with CAR1 in the presence of ornithine and arginine. In this complex CAR1 retains activity, but ARG3 activity is inhibited. The protein is Ornithine carbamoyltransferase (ARG3) of Saccharomyces cerevisiae (strain ATCC 204508 / S288c) (Baker's yeast).